Reading from the N-terminus, the 178-residue chain is N-alpha-acetyltransferase 20 (178 aa).

One can recognise an N-acetyltransferase domain in the interval 2-157 (TTLRAFTCDD…DAYDMRKALS (156 aa)). The interval 159–178 (DTEKKSIVPLPHPVRPEDIE) is disordered.

This sequence belongs to the acetyltransferase family. ARD1 subfamily. Component of the N-terminal acetyltransferase B (NatB) complex which is composed of naa20 and naa25.

The protein localises to the cytoplasm. It localises to the nucleus. It carries out the reaction N-terminal L-methionyl-L-asparaginyl-[protein] + acetyl-CoA = N-terminal N(alpha)-acetyl-L-methionyl-L-asparaginyl-[protein] + CoA + H(+). It catalyses the reaction N-terminal L-methionyl-L-glutaminyl-[protein] + acetyl-CoA = N-terminal N(alpha)-acetyl-L-methionyl-L-glutaminyl-[protein] + CoA + H(+). The catalysed reaction is N-terminal L-methionyl-L-aspartyl-[protein] + acetyl-CoA = N-terminal N(alpha)-acetyl-L-methionyl-L-aspartyl-[protein] + CoA + H(+). The enzyme catalyses N-terminal L-methionyl-L-glutamyl-[protein] + acetyl-CoA = N-terminal N(alpha)-acetyl-L-methionyl-L-glutamyl-[protein] + CoA + H(+). Its function is as follows. Catalytic subunit of the NatB complex which catalyzes acetylation of the N-terminal methionine residues of peptides beginning with Met-Asp, Met-Glu, Met-Asn and Met-Gln. Proteins with cell cycle functions are overrepresented in the pool of NatB substrates. Required for maintaining the structure and function of actomyosin fibers and for proper cellular migration. This is N-alpha-acetyltransferase 20 (naa20) from Xenopus laevis (African clawed frog).